A 373-amino-acid chain; its full sequence is Zinc finger CCCH domain-containing protein 15 homolog (373 aa).

The tract at residues 1-27 (MPPKQAQSKKTVEKEKKKKVEDKTFGL) is disordered. Residues 10–25 (KTVEKEKKKKVEDKTF) are compositionally biased toward basic and acidic residues. C3H1-type zinc fingers lie at residues 95–123 (DPKSIVCEYFKQGVTCPKGNRCKFAHDLA) and 167–205 (KPTAIICKFFLDAIESKKYGWFWECPNGGEKCAYQHCLP). The stretch at 252–326 (KEEKRLQKEK…ALANQINTSL (75 aa)) forms a coiled coil. Positions 325 to 373 (SLFTDGGVLPSDDDDDDDDDDDDDEDGDDEEEDDDEEEGEYEEEEASDE) are disordered. Over residues 335–373 (SDDDDDDDDDDDDDEDGDDEEEDDDEEEGEYEEEEASDE) the composition is skewed to acidic residues.

Belongs to the ZC3H15/TMA46 family.

The protein is Zinc finger CCCH domain-containing protein 15 homolog of Dictyostelium discoideum (Social amoeba).